The sequence spans 61 residues: Large ribosomal subunit protein bL32c (61 aa).

The interval 37 to 61 (SRSFSSGNEHPKPKGFSGQQQQTNK) is disordered.

Belongs to the bacterial ribosomal protein bL32 family.

The protein resides in the plastid. The protein localises to the chloroplast. The sequence is that of Large ribosomal subunit protein bL32c from Agrostis stolonifera (Creeping bentgrass).